The chain runs to 195 residues: MSRNLFLSITNFIRNLESLFLPHGGHPPALALAGFQHDHSPKSSQEFSLKQLIGDGLLWAVPKHRRSVEKRLKRKFGYPEYNWKPLREKRNLRSCLQCGHDHEMGVLCPFCYQKVLKETELMQSKIQETLGLDPVDKEVIVLYEGEKAEQSTDDLKNKRIVEMKKPRPMWFTKNLLQKSTQQLSETKEVKPSDLA.

Zn(2+) is bound by residues Cys95, Cys98, Cys108, and Cys111.

The protein belongs to the bacterial ribosomal protein bL32 family. As to quaternary structure, component of the mitochondrial large ribosomal subunit (mt-LSU).

It localises to the mitochondrion. In terms of biological role, component of the mitochondrial large ribosomal subunit (mt-LSU). The mitochondrial ribosome (mitoribosome) is a large ribonucleoprotein complex responsible for the synthesis of proteins inside mitochondria. The sequence is that of Large ribosomal subunit protein bL32m (mRpL32) from Drosophila melanogaster (Fruit fly).